The following is a 152-amino-acid chain: Ribonuclease H (152 aa).

In terms of domain architecture, RNase H type-1 spans 6–147 (KKNRVIAYTD…ADELANKAIA (142 aa)). The Mg(2+) site is built by Asp-15, Glu-53, Asp-75, and Asp-139.

This sequence belongs to the RNase H family. In terms of assembly, monomer. The cofactor is Mg(2+).

The protein localises to the cytoplasm. The catalysed reaction is Endonucleolytic cleavage to 5'-phosphomonoester.. In terms of biological role, endonuclease that specifically degrades the RNA of RNA-DNA hybrids. This chain is Ribonuclease H, found in Francisella tularensis subsp. tularensis (strain FSC 198).